A 559-amino-acid chain; its full sequence is MAETVWSTDTGEAVYRSRDPVRNLRLRVHLQRITSSNFLHYQPAAELGKDLIDLATFRPQPTASGHRPEEDEEEEIVIGWQEKLFSQFEVDLYQNETACQSPLDYQYRQEILKLENSGGKKNRRIFTYTDSDRYTNLEEHCQRMTTAASEVPSFLVERMANVRRRRQDRRGMEGGILKSRIVTWEPSEEFVRNNHVINTPLQTMHIMADLGPYKKLGYKKYEHVLCTLKVDSNGVITVKPDFTGLKGPYRIETEGEKQELWKYTIDNVSPHAQPEEEERERRVFKDLYGRHKEYLSSLVGTDFEMTVPGALRLFVNGEVVSAQGYEYDNLYVHFFVELPTAHWSSPAFQQLSGVTQTCTTKSLAMDKVAHFSYPFTFEAFFLHEDESSDALPEWPVLYCEVLSLDFWQRYRVEGYGAVVLPATPGSHTLTVSTWRPVELGTVAELRRFFIGGSLELEDLSYVRIPGSFKGERLSRFGLRTETTGTVTFRLHCLQQSRAFMESSSLQKRMRSVLDRLEGFSQQSSIHNVLEAFRRARRRMQEARESLPQDLVSPSGTLVS.

The C2 B9-type domain maps to 311–439 (LRLFVNGEVV…TVSTWRPVEL (129 aa)).

As to quaternary structure, part of the tectonic-like complex (also named B9 complex). Interacts with TMEM107. Interacts with TCTN3, AHI1, TCTN1, TCTN2, CC2D2A. Interacts with FLNA. Interacts with TMEM67. Interacts with B9D1 and B9D2.

It is found in the cytoplasm. The protein localises to the cytoskeleton. It localises to the cilium basal body. Its subcellular location is the microtubule organizing center. The protein resides in the centrosome. In terms of biological role, component of the tectonic-like complex, a complex localized at the transition zone of primary cilia and acting as a barrier that prevents diffusion of transmembrane proteins between the cilia and plasma membranes. Involved in centrosome migration to the apical cell surface during early ciliogenesis. Required for ciliary structure and function, including a role in regulating length and appropriate number through modulating centrosome duplication. Required for cell branching morphology. This Homo sapiens (Human) protein is Tectonic-like complex member MKS1 (MKS1).